Here is a 486-residue protein sequence, read N- to C-terminus: uncharacterized protein (486 aa).

Residue 24 to 35 coordinates NAD(+); it reads IVHLGFGAFHRA.

Belongs to the mannitol dehydrogenase family. UxuB subfamily.

This is an uncharacterized protein from Escherichia coli (strain K12).